The primary structure comprises 324 residues: MVFSKISQVAHYTPKQVISNDDLSQIMDTSHEWISSRTGIEKRHISTVEMTSDLAIRVAEQLLAGSGYDATALDFIIVATISPDASMPSTAAKVQAAIGATNAFAFDMTAACSGFVFALAMADKLIASGAYQRGLVIGAETLSKIIDWQDRSTAVLFGDGAGGVLLEASEQQHFLAEALHTDGARSQSLTSGQSSLRSPFSQGQEVNSFLQMDGRAIFDFAIRDVSRSIAAIIEQSGLAKEELDYLLLHQANRRILDKMAKKIGMPREKFLENMMHYGNTSAASIPILLSESVQNGQLKLDGSQHILLSGFGGGLTWGSLIVKI.

Active-site residues include Cys112 and His249. Residues 250 to 254 are ACP-binding; that stretch reads QANRR. Residue Asn279 is part of the active site.

This sequence belongs to the thiolase-like superfamily. FabH family. Homodimer.

It is found in the cytoplasm. It catalyses the reaction malonyl-[ACP] + acetyl-CoA + H(+) = 3-oxobutanoyl-[ACP] + CO2 + CoA. The protein operates within lipid metabolism; fatty acid biosynthesis. Its function is as follows. Catalyzes the condensation reaction of fatty acid synthesis by the addition to an acyl acceptor of two carbons from malonyl-ACP. Catalyzes the first condensation reaction which initiates fatty acid synthesis and may therefore play a role in governing the total rate of fatty acid production. Possesses both acetoacetyl-ACP synthase and acetyl transacylase activities. Its substrate specificity determines the biosynthesis of branched-chain and/or straight-chain of fatty acids. The sequence is that of Beta-ketoacyl-[acyl-carrier-protein] synthase III from Streptococcus equi subsp. zooepidemicus (strain MGCS10565).